A 614-amino-acid polypeptide reads, in one-letter code: Probable peptide-binding protein YejA (614 aa).

The N-terminal stretch at 1-27 (MILAPLKSRILIALAASALLIPAVASA) is a signal peptide.

This sequence belongs to the bacterial solute-binding protein 5 family. As to quaternary structure, the complex is composed of one ATP-binding protein (YejF), two transmembrane proteins (YejB and YejE) and a solute-binding protein (YejA).

It is found in the periplasm. In terms of biological role, probably part of the ABC transporter complex YejABEF, which is likely involved in broad-spectrum peptide import. The chain is Probable peptide-binding protein YejA from Agrobacterium fabrum (strain C58 / ATCC 33970) (Agrobacterium tumefaciens (strain C58)).